A 156-amino-acid chain; its full sequence is Ribosomal RNA large subunit methyltransferase H (156 aa).

Residues leucine 73, glycine 104, and 123–128 contribute to the S-adenosyl-L-methionine site; that span reads IGPLTL.

The protein belongs to the RNA methyltransferase RlmH family. In terms of assembly, homodimer.

It is found in the cytoplasm. The enzyme catalyses pseudouridine(1915) in 23S rRNA + S-adenosyl-L-methionine = N(3)-methylpseudouridine(1915) in 23S rRNA + S-adenosyl-L-homocysteine + H(+). Specifically methylates the pseudouridine at position 1915 (m3Psi1915) in 23S rRNA. This Xanthomonas campestris pv. campestris (strain 8004) protein is Ribosomal RNA large subunit methyltransferase H.